A 488-amino-acid chain; its full sequence is MERRKIMKITINYGKRLGKINKFWAKCVGSCHATTALREDWRKQLKKCRDELGFEYIRFHGWLNDDMSVCFRNDDGLLSFSFFNIDSIIDFLLEIGMKPFIELSFMPEALASGTKTVFHYKGNITPPKSYEEWGQLIEELARHLISRYGKNEVREWFFEVWNEPNLKDFFWAGTMEEYFKLYKYAAFAIKKVDSELRVGGPATAIDAWIPELKDFCTKNGVPIDFISTHQYPTDLAFSTSSNMEEAMAKAKRGELAERVKKALEEAYPLPVYYTEWNNSPSPRDPYHDIPYDAAFIVKTIIDIIDLPLGCYSYWTFTDIFEECGQSSLPFHGGFGLLNIHGIPKPSYRAFQILDKLNGERIEIEFEDKSPTIDCIAVQNEREIILVISNHNVPLSPIDTENIKVVLKGIENCREVFVERIDEYNANPKRVWLEMGSPAYLNREQIEELIKASELKKEKVSWGIVNNNEITFDLSVLPHSVVAVTIKNG.

The active-site Proton donor is the Glu-163. Glu-275 (nucleophile) is an active-site residue.

The protein belongs to the glycosyl hydrolase 39 family.

The catalysed reaction is Hydrolysis of (1-&gt;4)-beta-D-xylans, to remove successive D-xylose residues from the non-reducing termini.. Functionally, beta-xylosidase is an intracellular xylan-degrading enzyme. The polypeptide is Beta-xylosidase (xynB) (Caldicellulosiruptor saccharolyticus (Caldocellum saccharolyticum)).